Reading from the N-terminus, the 845-residue chain is MLKFIKNIFKDSNTRELEKLQHIVDEINSLEPYMKKLSDEQLRDKTREFKERIVKGETLDELLPEAFAVVREAAQRSTSEKFRHYDVQLMGGIVLHQGKIAEMKTGEGKTLAATLPVYLNALTGKGVHVVTVNDYLAKRDSEWMGQIYRFLGLSVGVILNGMTPRERKKAYQADVTYGSNNEFGFDYLRDNLAYNPDDVVQGELHYAILDEVDSILIDEARTPLIISGPAQETTKDYRKFNRIIPRLVKGRDYEVDEKNRTVHLTEEGLARVEKKLNISNLYDDQNFQLAHQLNQALKAHTLMKKDRDYIVKDGEVKIVDEFTGRIMEGRRFSEGLHQAIEAKEGVAVNKESQTFASITYQNFFRMYDKLAGMTGTAATEEEEFIKIYGMEVVQIPTNKPMIREDLPDVVFRTEEAKFKAVAEEVALKYKKGQPVLVGTVDIEKSEKLSRMLKRKGIPHQVLNAKNHEKEAEIIKKAGQKNSVTISTNMAGRGTDIVLGEGVKELGGLHVIGTERHESRRIDNQLRGRSGRQGDPGSSQFFVSLEDDLLRLFGSDNISMLMDRMGFDDDQPIEHKMITRSLERAQKKVEGRNFEIRKTILEYDNIMNKQREIIYEQRKKILFASDLKEYIMGMIEMLVDDIMDTYLSSEVHPDDWDIDGLIKYLSEFNLVNINEEDFKDKDREKIREELIKIATKTYEEKEAEIGKESMQKLIKNLALRIIDRNWMNHLDNMDELRQGIGLRAYGQRDPLTEYKFESYDMFNGMTGTIREEIIKNLFRIEVKEREINLDPIMLKRLKYRRNFLSNRANRPQKKAKRQPIVKPDKPGRNDPCPCGSGKKYKHCCGR.

Residues Gln-88, 106–110 (GEGKT), and Asp-495 contribute to the ATP site. The tract at residues 804 to 838 (SNRANRPQKKAKRQPIVKPDKPGRNDPCPCGSGKK) is disordered. Basic residues predominate over residues 809–818 (RPQKKAKRQP). Cys-831, Cys-833, Cys-842, and Cys-843 together coordinate Zn(2+).

This sequence belongs to the SecA family. In terms of assembly, monomer and homodimer. Part of the essential Sec protein translocation apparatus which comprises SecA, SecYEG and auxiliary proteins SecDF. Other proteins may also be involved. Zn(2+) serves as cofactor.

It localises to the cell inner membrane. The protein resides in the cytoplasm. The catalysed reaction is ATP + H2O + cellular proteinSide 1 = ADP + phosphate + cellular proteinSide 2.. Its function is as follows. Part of the Sec protein translocase complex. Interacts with the SecYEG preprotein conducting channel. Has a central role in coupling the hydrolysis of ATP to the transfer of proteins into and across the cell membrane, serving as an ATP-driven molecular motor driving the stepwise translocation of polypeptide chains across the membrane. The sequence is that of Protein translocase subunit SecA from Halothermothrix orenii (strain H 168 / OCM 544 / DSM 9562).